We begin with the raw amino-acid sequence, 687 residues long: Leucine-rich repeat and fibronectin type III domain-containing protein 1-like protein (687 aa).

An N-terminal signal peptide occupies residues 1–17 (MEWLIFSLLLLAVSASG). The LRRNT domain occupies 18 to 51 (QLCPKRCMCQNLSPSLAILCAKTGLLFVPTVIDR). The Extracellular segment spans residues 18 to 527 (QLCPKRCMCQ…LRSHFLGGTM (510 aa)). LRR repeat units lie at residues 52 to 73 (RTVELRLTENFITAVKRRDFAN), 76 to 97 (SLLHLTLSRNTISQIMPYTFAD), 100 to 121 (RLRALHLDSNRLSVITDDHFRG), 124 to 145 (NLRHLILANNQLHNISPHAFDD), 149 to 170 (TLEDLDLSYNNLVDIPWDTIGR), 173 to 194 (NVNTLNMDHNLIEHVPLGIFSN), and 197 to 218 (KLARLDMTSNKLKKIPPDPLFL). Asn-73 carries N-linked (GlcNAc...) asparagine glycosylation. Positions 241–287 (NPLHCNCELLWLRRLTREDDLETCASPPDLTAKYFWTIPEEEFICDP) constitute an LRRCT domain. Positions 287 to 376 (PPVITRKSPK…STGTVELVVS (90 aa)) constitute an Ig-like domain. A disulfide bridge connects residues Cys-309 and Cys-358. N-linked (GlcNAc...) asparagine glycosylation is found at Asn-331, Asn-340, Asn-346, Asn-383, Asn-410, and Asn-450. The tract at residues 384-412 (STNRIREPDPGPSDILTSAKSTSSVSNET) is disordered. Polar residues predominate over residues 398–412 (ILTSAKSTSSVSNET). The 96-residue stretch at 415-510 (QERKVVLAEL…VGCVTFVTET (96 aa)) folds into the Fibronectin type-III domain. Residues 528 to 548 (IIIIGGIIVASVLVFIIILMI) form a helical membrane-spanning segment. Over 549 to 687 (RYKVYSQHGA…AQRDWSDFKI (139 aa)) the chain is Cytoplasmic. 2 disordered regions span residues 563–601 (GTAMTNVRSQTNGGQAAGQVPRSSSKIVEGQEASGGSLG) and 630–687 (EDIV…DFKI). 2 stretches are compositionally biased toward polar residues: residues 565–576 (AMTNVRSQTNGG) and 657–672 (EGTSSDTQEDTASPQV). A compositionally biased stretch (basic and acidic residues) spans 673 to 687 (SDEKKAQRDWSDFKI).

It belongs to the LRFN family.

It localises to the membrane. It is found in the synapse. May be involved in the regulation of excitatory synapses. The chain is Leucine-rich repeat and fibronectin type III domain-containing protein 1-like protein (lrfn1l) from Danio rerio (Zebrafish).